A 378-amino-acid polypeptide reads, in one-letter code: Sterol 24-C-methyltransferase erg6 (378 aa).

It belongs to the class I-like SAM-binding methyltransferase superfamily. Erg6/SMT family.

The protein localises to the nucleus. Its subcellular location is the endoplasmic reticulum. It carries out the reaction zymosterol + S-adenosyl-L-methionine = fecosterol + S-adenosyl-L-homocysteine + H(+). The catalysed reaction is lanosterol + S-adenosyl-L-methionine = eburicol + S-adenosyl-L-homocysteine + H(+). Its pathway is steroid metabolism; ergosterol biosynthesis. Sterol 24-C-methyltransferase; part of the third module of ergosterol biosynthesis pathway that includes by the late steps of the pathway. Erg6 catalyzes the methyl transfer from S-adenosyl-methionine to the C-24 of zymosterol to form fecosterol. The third module or late pathway involves the ergosterol synthesis itself through consecutive reactions that mainly occur in the endoplasmic reticulum (ER) membrane. Firstly, the squalene synthase erg9 catalyzes the condensation of 2 farnesyl pyrophosphate moieties to form squalene, which is the precursor of all steroids. Secondly, squalene is converted into lanosterol by the consecutive action of the squalene epoxidase erg1 and the lanosterol synthase erg7. The lanosterol 14-alpha-demethylase erg11/cyp1 catalyzes C14-demethylation of lanosterol to produce 4,4'-dimethyl cholesta-8,14,24-triene-3-beta-ol. In the next steps, a complex process involving various demethylation, reduction and desaturation reactions catalyzed by the C-14 reductase erg24 and the C-4 demethylation complex erg25-erg26-erg27 leads to the production of zymosterol. Erg28 likely functions in the C-4 demethylation complex reaction by tethering erg26 and Erg27 to the endoplasmic reticulum or to facilitate interaction between these proteins. Then, the sterol 24-C-methyltransferase erg6 catalyzes the methyl transfer from S-adenosyl-methionine to the C-24 of zymosterol to form fecosterol. The C-8 sterol isomerase erg2 catalyzes the reaction which results in unsaturation at C-7 in the B ring of sterols and thus converts fecosterol to episterol. The sterol-C5-desaturases erg31 and erg32 then catalyze the introduction of a C-5 double bond in the B ring to produce 5-dehydroepisterol. The C-22 sterol desaturase erg5 further converts 5-dehydroepisterol into ergosta-5,7,22,24(28)-tetraen-3beta-ol by forming the C-22(23) double bond in the sterol side chain. Finally, ergosta-5,7,22,24(28)-tetraen-3beta-ol is substrate of the C-24(28) sterol reductase erg4 to produce ergosterol. In the genus Schizosaccharomyces, a second route exists between lanosterol and fecosterol, via the methylation of lanosterol to eburicol by erg6, followed by C14-demethylation by erg11/cyp1 and C4-demethylation by the demethylation complex erg25-erg26-erg27. The sequence is that of Sterol 24-C-methyltransferase erg6 from Schizosaccharomyces pombe (strain 972 / ATCC 24843) (Fission yeast).